Consider the following 529-residue polypeptide: Keratin, type II cytoskeletal 74 (529 aa).

Positions 1-139 are head; the sequence is MSRQLNIKSS…DPEIQKVRAQ (139 aa). A coil 1A region spans residues 140 to 175; sequence EREQIKVLNDKFASFIDKVRFLEQQNQVLETKWELL. One can recognise an IF rod domain in the interval 140–453; sequence EREQIKVLND…KLLEGEECRM (314 aa). The tract at residues 176–194 is linker 1; it reads QQLDLNNCKKNLEPILEGY. The segment at 195–286 is coil 1B; sequence ISNLRKQLET…CLYDAEIAQI (92 aa). A linker 12 region spans residues 287-310; the sequence is QTHASETSVILSMDNNRDLDLDSI. The interval 311 to 449 is coil 2; it reads IAEVRMHYEE…ATYRKLLEGE (139 aa). Residues 450–529 form a tail region; it reads ECRMSGENPS…ASIPARKATR (80 aa). A compositionally biased stretch (low complexity) spans 484–500; the sequence is GASAVAGSSGSTQSGQT. Residues 484–529 are disordered; the sequence is GASAVAGSSGSTQSGQTKTTEARGGDLKDTQGKSTPASIPARKATR. A compositionally biased stretch (basic and acidic residues) spans 503–514; the sequence is TEARGGDLKDTQ. T513 carries the phosphothreonine modification.

This sequence belongs to the intermediate filament family. Heterotetramer of two type I and two type II keratins. In terms of tissue distribution, highly expressed in hair follicles from scalp. In hair, it is specifically present in the inner root sheath (IRS) of the hair follicle. Present in the IRS Huxley layer, but not in Henle layer or cuticle of the IRS. In the IRS Huxley layer, it is expressed in specialized Huxley cells, termed 'Fluegelzellen, along the area of differentiated Henle cells (at protein level).

Has a role in hair formation. Specific component of keratin intermediate filaments in the inner root sheath (IRS) of the hair follicle. The sequence is that of Keratin, type II cytoskeletal 74 (KRT74) from Homo sapiens (Human).